The chain runs to 493 residues: GTPase Der (493 aa).

EngA-type G domains lie at proline 3–glycine 166 and leucine 207–threonine 380. Residues glycine 9–serine 16, aspartate 56–isoleucine 60, asparagine 118–aspartate 121, glycine 213–serine 220, aspartate 260–valine 264, and asparagine 325–aspartate 328 contribute to the GTP site. In terms of domain architecture, KH-like spans arginine 381–alanine 465.

It belongs to the TRAFAC class TrmE-Era-EngA-EngB-Septin-like GTPase superfamily. EngA (Der) GTPase family. Associates with the 50S ribosomal subunit.

GTPase that plays an essential role in the late steps of ribosome biogenesis. This Photorhabdus laumondii subsp. laumondii (strain DSM 15139 / CIP 105565 / TT01) (Photorhabdus luminescens subsp. laumondii) protein is GTPase Der.